The chain runs to 450 residues: tRNA-2-methylthio-N(6)-dimethylallyladenosine synthase (450 aa).

One can recognise an MTTase N-terminal domain in the interval 14 to 132 (GEFFIETWGC…FPNYLNEVKK (119 aa)). 6 residues coordinate [4Fe-4S] cluster: Cys23, Cys59, Cys93, Cys169, Cys173, and Cys176. The 231-residue stretch at 155 to 385 (RKNSMKAFVT…VEVVNEISAK (231 aa)) folds into the Radical SAM core domain. The region spanning 388–450 (KAYEGKIEEV…NSFSLTGEEI (63 aa)) is the TRAM domain.

This sequence belongs to the methylthiotransferase family. MiaB subfamily. As to quaternary structure, monomer. The cofactor is [4Fe-4S] cluster.

The protein resides in the cytoplasm. It carries out the reaction N(6)-dimethylallyladenosine(37) in tRNA + (sulfur carrier)-SH + AH2 + 2 S-adenosyl-L-methionine = 2-methylsulfanyl-N(6)-dimethylallyladenosine(37) in tRNA + (sulfur carrier)-H + 5'-deoxyadenosine + L-methionine + A + S-adenosyl-L-homocysteine + 2 H(+). Its function is as follows. Catalyzes the methylthiolation of N6-(dimethylallyl)adenosine (i(6)A), leading to the formation of 2-methylthio-N6-(dimethylallyl)adenosine (ms(2)i(6)A) at position 37 in tRNAs that read codons beginning with uridine. The polypeptide is tRNA-2-methylthio-N(6)-dimethylallyladenosine synthase (Clostridium botulinum (strain Loch Maree / Type A3)).